A 603-amino-acid chain; its full sequence is UvrABC system protein C (603 aa).

A GIY-YIG domain is found at 15–92 (DQPGCYLMKD…IKKHDPRFNI (78 aa)). The UVR domain occupies 197-232 (KTVKNDLMKKMQVAAENMEFEKAGEFRDQINAIETT).

It belongs to the UvrC family. In terms of assembly, interacts with UvrB in an incision complex.

Its subcellular location is the cytoplasm. Its function is as follows. The UvrABC repair system catalyzes the recognition and processing of DNA lesions. UvrC both incises the 5' and 3' sides of the lesion. The N-terminal half is responsible for the 3' incision and the C-terminal half is responsible for the 5' incision. The sequence is that of UvrABC system protein C from Listeria welshimeri serovar 6b (strain ATCC 35897 / DSM 20650 / CCUG 15529 / CIP 8149 / NCTC 11857 / SLCC 5334 / V8).